A 412-amino-acid polypeptide reads, in one-letter code: Tryptophan 2,3-dioxygenase (412 aa).

Substrate-binding positions include 79–83 (FIVVH), Tyr146, and Arg150. His346 is a heme binding site. Substrate is bound at residue Thr360.

Belongs to the tryptophan 2,3-dioxygenase family. As to quaternary structure, homotetramer. Requires heme as cofactor.

It catalyses the reaction L-tryptophan + O2 = N-formyl-L-kynurenine. It functions in the pathway amino-acid degradation; L-tryptophan degradation via kynurenine pathway; L-kynurenine from L-tryptophan: step 1/2. Functionally, heme-dependent dioxygenase that catalyzes the oxidative cleavage of the L-tryptophan (L-Trp) pyrrole ring and converts L-tryptophan to N-formyl-L-kynurenine. Catalyzes the oxidative cleavage of the indole moiety. The protein is Tryptophan 2,3-dioxygenase of Sorangium cellulosum (strain So ce56) (Polyangium cellulosum (strain So ce56)).